The primary structure comprises 225 residues: Uridylate kinase (225 aa).

ATP is bound at residue 9-10 (GS). Glycine 46 lines the UMP pocket. ATP-binding residues include glycine 47 and arginine 51. UMP contacts are provided by residues aspartate 67 and 115–121 (THPAHTT). ATP-binding residues include threonine 141, asparagine 142, tyrosine 147, and aspartate 150.

Belongs to the UMP kinase family. As to quaternary structure, homohexamer.

Its subcellular location is the cytoplasm. The catalysed reaction is UMP + ATP = UDP + ADP. Its pathway is pyrimidine metabolism; CTP biosynthesis via de novo pathway; UDP from UMP (UMPK route): step 1/1. Its activity is regulated as follows. Inhibited by UTP. Its function is as follows. Catalyzes the reversible phosphorylation of UMP to UDP. This is Uridylate kinase from Methanococcus vannielii (strain ATCC 35089 / DSM 1224 / JCM 13029 / OCM 148 / SB).